A 339-amino-acid chain; its full sequence is MENVNRIVAEGIAAVEAAQDFNALEQIKARYLGKTGELTGLLKTLFTGQMSPEERKTIGAHINECKNRFQTAFNAKRDALNEAKLQARLAAEALDITLPGRAQEGGFTSLHPVTLTLQRVVELFHGMGFEVADGPEIEDDFHNFQALNIPANHPARAMQDTFYVENGFTDVLRTHTSPIQIRYMLDKKEPPIRIIAPGRVYRVDSDATHSPMFHQAEGLWVEEGVTFAFTDLKAVFTDFIRRFFERDDLQVRFRPSFFPFTEPSAEIDIMGENGKWLEVGGCGMVHPNVFTLKNVNIDPEKYTGFAFGIGLDRFAMLRYNVNDLRLFFDNDLNFLKQFE.

Mg(2+) is bound at residue Glu-262.

Belongs to the class-II aminoacyl-tRNA synthetase family. Phe-tRNA synthetase alpha subunit type 1 subfamily. Tetramer of two alpha and two beta subunits. Mg(2+) serves as cofactor.

It localises to the cytoplasm. The enzyme catalyses tRNA(Phe) + L-phenylalanine + ATP = L-phenylalanyl-tRNA(Phe) + AMP + diphosphate + H(+). The chain is Phenylalanine--tRNA ligase alpha subunit from Neisseria gonorrhoeae (strain ATCC 700825 / FA 1090).